Reading from the N-terminus, the 173-residue chain is Putative phosphoesterase GK0864 (173 aa).

Residue His-34 is the Proton donor of the active site. 2 short sequence motifs (HXTX) span residues 34–37 (HITL) and 115–118 (HITI). The Proton acceptor role is filled by His-115.

The protein belongs to the 2H phosphoesterase superfamily. YjcG family.

This chain is Putative phosphoesterase GK0864, found in Geobacillus kaustophilus (strain HTA426).